The primary structure comprises 257 residues: uncharacterized protein (257 aa).

The signal sequence occupies residues 1-22; that stretch reads MRYLKRLSWYISILILIVVIAG. The N-palmitoyl cysteine moiety is linked to residue cysteine 23. Residue cysteine 23 is the site of S-diacylglycerol cysteine attachment.

Belongs to the staphylococcal tandem lipoprotein family.

It localises to the cell membrane. This is an uncharacterized protein from Staphylococcus aureus (strain N315).